Consider the following 417-residue polypeptide: Phosphoglycerate kinase (417 aa).

(2R)-3-phosphoglycerate contacts are provided by V23, D24, F25, N26, Q38, R39, S62, H63, G65, R66, L121, R122, H169, and R170. Residue G213 participates in ADP binding. Residue G213 participates in CDP binding. A214 and K215 together coordinate AMP. A214 is a binding site for ATP. A214 is a Mg(2+) binding site. Residue D218 participates in CDP binding. D218 contributes to the Mg(2+) binding site. An AMP-binding site is contributed by K219. K219 provides a ligand contact to ATP. G237 serves as a coordination point for ADP. G237 is a binding site for CDP. The AMP site is built by G238 and G312. Positions 238 and 312 each coordinate ATP. CDP is bound by residues G337 and F342. F342 contributes to the ADP binding site. E343 is a binding site for AMP. The ATP site is built by E343, D374, and T375. D374 contributes to the Mg(2+) binding site.

This sequence belongs to the phosphoglycerate kinase family. As to quaternary structure, monomer. It depends on Mg(2+) as a cofactor.

The protein resides in the cytoplasm. The protein localises to the mitochondrion. It catalyses the reaction (2R)-3-phosphoglycerate + ATP = (2R)-3-phospho-glyceroyl phosphate + ADP. It functions in the pathway carbohydrate degradation; glycolysis; pyruvate from D-glyceraldehyde 3-phosphate: step 2/5. Catalyzes one of the two ATP producing reactions in the glycolytic pathway via the reversible conversion of 1,3-diphosphoglycerate to 3-phosphoglycerate. Both L- and D- forms of purine and pyrimidine nucleotides can be used as substrates, but the activity is much lower on pyrimidines. Negatively regulates the biosynthesis of acetyl-CoA from pyruvate in the mitochondrion. This Yarrowia lipolytica (strain CLIB 122 / E 150) (Yeast) protein is Phosphoglycerate kinase (PGK1).